The chain runs to 162 residues: Interleukin-15 (162 aa).

A signal peptide spans 1–29; sequence MRISKPHLRSISIQCYLCLLLNSHFLTEA. The propeptide occupies 30–48; that stretch reads GIHVFILGCFSAGLPKTEA. 2 disulfide bridges follow: Cys83–Cys133 and Cys90–Cys136. Residue Asn127 is glycosylated (N-linked (GlcNAc...) asparagine).

The protein belongs to the IL-15/IL-21 family. Most abundant in placenta and skeletal muscle. It is also detected in the heart, lung, liver and kidney. IL15-S21AA is preferentially expressed in tissues such as testis and thymus.

Its subcellular location is the secreted. The protein resides in the cytoplasm. It is found in the nucleus. Functionally, cytokine that plays a major role in the development of inflammatory and protective immune responses to microbial invaders and parasites by modulating immune cells of both the innate and adaptive immune systems. Stimulates the proliferation of natural killer cells, T-cells and B-cells and promotes the secretion of several cytokines. In monocytes, induces the production of IL8 and monocyte chemotactic protein 1/CCL2, two chemokines that attract neutrophils and monocytes respectively to sites of infection. Unlike most cytokines, which are secreted in soluble form, IL15 is expressed in association with its high affinity IL15RA on the surface of IL15-producing cells and delivers signals to target cells that express IL2RB and IL2RG receptor subunits. Binding to its receptor triggers the phosphorylation of JAK1 and JAK3 and the recruitment and subsequent phosphorylation of signal transducer and activator of transcription-3/STAT3 and STAT5. In mast cells, induces the rapid tyrosine phosphorylation of STAT6 and thereby controls mast cell survival and release of cytokines such as IL4. This chain is Interleukin-15 (IL15), found in Homo sapiens (Human).